The chain runs to 345 residues: MEGVYFNIDNGFIEGVVRGYRNGLLSNNQYINLTQCDTLEDLKLQLSSTDYGNFLSSVSSESLTTSLIQEYASSKLYHEFNYIRDQSSGSTRKFMDYITYGYMIDNVALMITGTIHDRDKGEILQRCHPLGWFDTLPTLSVATDLESLYETVLVDTPLAPYFKNCFDTAEELDDMNIEIIRNKLYKAYLEDFYNFVTEEIPEPAKECMQTLLGFEADRRSINIALNSLQSSDIDPDLKSDLLPNIGKLYPLATFHLAQAQDFEGVRAALANVYEYRGFLETGNLEDHFYQLEMELCRDAFTQQFAISTVWAWMKSKEQEVRNITWIAECIAQNQRERINNYISVY.

An N-acetylmethionine modification is found at M1.

This sequence belongs to the V-ATPase V0D/AC39 subunit family. In terms of assembly, V-ATPase is a heteromultimeric enzyme composed of a peripheral catalytic V1 complex (components A to H) attached to an integral membrane V0 proton pore complex (components: a, c, c', c'', d, e, f and VOA1).

Its subcellular location is the vacuole membrane. Subunit of the V0 complex of vacuolar(H+)-ATPase (V-ATPase), a multisubunit enzyme composed of a peripheral complex (V1) that hydrolyzes ATP and a membrane integral complex (V0) that translocates protons. V-ATPase is responsible for acidifying and maintaining the pH of intracellular compartments. This subunit is a non-integral membrane component of the membrane pore domain and is required for proper assembly of the V0 sector. Might be involved in the regulated assembly of V1 subunits onto the membrane sector or alternatively may prevent the passage of protons through V0 pores. The protein is V-type proton ATPase subunit d of Saccharomyces cerevisiae (strain ATCC 204508 / S288c) (Baker's yeast).